A 436-amino-acid chain; its full sequence is Trigger factor (436 aa).

Residues 162-247 (GDRVIIDFEG…LNNVSEATLP (86 aa)) form the PPIase FKBP-type domain.

Belongs to the FKBP-type PPIase family. Tig subfamily.

It localises to the cytoplasm. The catalysed reaction is [protein]-peptidylproline (omega=180) = [protein]-peptidylproline (omega=0). Functionally, involved in protein export. Acts as a chaperone by maintaining the newly synthesized protein in an open conformation. Functions as a peptidyl-prolyl cis-trans isomerase. This Neisseria meningitidis serogroup C (strain 053442) protein is Trigger factor.